Consider the following 696-residue polypeptide: DNA-directed RNA polymerase subunit beta N-terminal section (696 aa).

Belongs to the RNA polymerase beta chain family. In plastids the minimal PEP RNA polymerase catalytic core is composed of four subunits: alpha, beta, beta', and beta''. When a (nuclear-encoded) sigma factor is associated with the core the holoenzyme is formed, which can initiate transcription.

It is found in the plastid. Its subcellular location is the chloroplast. The enzyme catalyses RNA(n) + a ribonucleoside 5'-triphosphate = RNA(n+1) + diphosphate. DNA-dependent RNA polymerase catalyzes the transcription of DNA into RNA using the four ribonucleoside triphosphates as substrates. The chain is DNA-directed RNA polymerase subunit beta N-terminal section (rpoB1) from Stigeoclonium helveticum (Green alga).